The chain runs to 636 residues: Chaperone protein HtpG (636 aa).

The segment at 1–345 is a; substrate-binding; sequence MSESATANAN…SSDLPLNVSR (345 aa). Positions 346–562 are b; that stretch reads EILQQSKDID…EHDPSGNLAR (217 aa). The tract at residues 563–636 is c; that stretch reads LMKAAGQPMP…NDLMMALSAK (74 aa).

It belongs to the heat shock protein 90 family. As to quaternary structure, homodimer.

The protein localises to the cytoplasm. Functionally, molecular chaperone. Has ATPase activity. This is Chaperone protein HtpG from Dechloromonas aromatica (strain RCB).